The primary structure comprises 397 residues: Succinate--CoA ligase [ADP-forming] subunit beta (397 aa).

Positions 9–254 constitute an ATP-grasp domain; the sequence is KALLKGYGAP…ETEEDAKEIE (246 aa). ATP-binding positions include lysine 46, 53-55, glutamate 109, alanine 112, and glutamate 117; that span reads GRG. Asparagine 209 and aspartate 223 together coordinate Mg(2+). Substrate is bound by residues asparagine 274 and 331-333; that span reads GIM.

The protein belongs to the succinate/malate CoA ligase beta subunit family. In terms of assembly, heterotetramer of two alpha and two beta subunits. It depends on Mg(2+) as a cofactor.

The enzyme catalyses succinate + ATP + CoA = succinyl-CoA + ADP + phosphate. The catalysed reaction is GTP + succinate + CoA = succinyl-CoA + GDP + phosphate. Its pathway is carbohydrate metabolism; tricarboxylic acid cycle; succinate from succinyl-CoA (ligase route): step 1/1. Its function is as follows. Succinyl-CoA synthetase functions in the citric acid cycle (TCA), coupling the hydrolysis of succinyl-CoA to the synthesis of either ATP or GTP and thus represents the only step of substrate-level phosphorylation in the TCA. The beta subunit provides nucleotide specificity of the enzyme and binds the substrate succinate, while the binding sites for coenzyme A and phosphate are found in the alpha subunit. The chain is Succinate--CoA ligase [ADP-forming] subunit beta from Rhizobium johnstonii (strain DSM 114642 / LMG 32736 / 3841) (Rhizobium leguminosarum bv. viciae).